A 212-amino-acid chain; its full sequence is Uracil phosphoribosyltransferase (212 aa).

Residues arginine 78, arginine 103, and 130–138 each bind 5-phospho-alpha-D-ribose 1-diphosphate; that span reads DPMLATGGS. Residues isoleucine 193 and 198–200 contribute to the uracil site; that span reads GDA. Position 199 (aspartate 199) interacts with 5-phospho-alpha-D-ribose 1-diphosphate.

It belongs to the UPRTase family. It depends on Mg(2+) as a cofactor.

The catalysed reaction is UMP + diphosphate = 5-phospho-alpha-D-ribose 1-diphosphate + uracil. The protein operates within pyrimidine metabolism; UMP biosynthesis via salvage pathway; UMP from uracil: step 1/1. Its activity is regulated as follows. Allosterically activated by GTP. Functionally, catalyzes the conversion of uracil and 5-phospho-alpha-D-ribose 1-diphosphate (PRPP) to UMP and diphosphate. The sequence is that of Uracil phosphoribosyltransferase from Ectopseudomonas mendocina (strain ymp) (Pseudomonas mendocina).